The chain runs to 431 residues: Trigger factor (431 aa).

Positions 165 to 250 constitute a PPIase FKBP-type domain; sequence TDTAVFDFEG…LHQIKTKKIP (86 aa).

Belongs to the FKBP-type PPIase family. Tig subfamily.

It localises to the cytoplasm. It catalyses the reaction [protein]-peptidylproline (omega=180) = [protein]-peptidylproline (omega=0). Functionally, involved in protein export. Acts as a chaperone by maintaining the newly synthesized protein in an open conformation. Functions as a peptidyl-prolyl cis-trans isomerase. This Aster yellows witches'-broom phytoplasma (strain AYWB) protein is Trigger factor.